The primary structure comprises 434 residues: Serine--tRNA ligase (434 aa).

237-239 is a binding site for L-serine; the sequence is TAE. 268 to 270 contacts ATP; it reads RAE. Residue Glu-291 coordinates L-serine. Residue 358-361 participates in ATP binding; that stretch reads EISS. L-serine is bound at residue Ser-393.

Belongs to the class-II aminoacyl-tRNA synthetase family. Type-1 seryl-tRNA synthetase subfamily. Homodimer. The tRNA molecule binds across the dimer.

The protein resides in the cytoplasm. It carries out the reaction tRNA(Ser) + L-serine + ATP = L-seryl-tRNA(Ser) + AMP + diphosphate + H(+). It catalyses the reaction tRNA(Sec) + L-serine + ATP = L-seryl-tRNA(Sec) + AMP + diphosphate + H(+). Its pathway is aminoacyl-tRNA biosynthesis; selenocysteinyl-tRNA(Sec) biosynthesis; L-seryl-tRNA(Sec) from L-serine and tRNA(Sec): step 1/1. In terms of biological role, catalyzes the attachment of serine to tRNA(Ser). Is also able to aminoacylate tRNA(Sec) with serine, to form the misacylated tRNA L-seryl-tRNA(Sec), which will be further converted into selenocysteinyl-tRNA(Sec). The protein is Serine--tRNA ligase of Rhodopseudomonas palustris (strain BisB5).